A 125-amino-acid chain; its full sequence is Large ribosomal subunit protein bL12 (125 aa).

This sequence belongs to the bacterial ribosomal protein bL12 family. In terms of assembly, homodimer. Part of the ribosomal stalk of the 50S ribosomal subunit. Forms a multimeric L10(L12)X complex, where L10 forms an elongated spine to which 2 to 4 L12 dimers bind in a sequential fashion. Binds GTP-bound translation factors.

In terms of biological role, forms part of the ribosomal stalk which helps the ribosome interact with GTP-bound translation factors. Is thus essential for accurate translation. The polypeptide is Large ribosomal subunit protein bL12 (Rickettsia canadensis (strain McKiel)).